The chain runs to 154 residues: SsrA-binding protein (154 aa).

The interval 135–154 (KREDLKRRQDQRDMARAMKR) is disordered.

It belongs to the SmpB family.

It is found in the cytoplasm. Its function is as follows. Required for rescue of stalled ribosomes mediated by trans-translation. Binds to transfer-messenger RNA (tmRNA), required for stable association of tmRNA with ribosomes. tmRNA and SmpB together mimic tRNA shape, replacing the anticodon stem-loop with SmpB. tmRNA is encoded by the ssrA gene; the 2 termini fold to resemble tRNA(Ala) and it encodes a 'tag peptide', a short internal open reading frame. During trans-translation Ala-aminoacylated tmRNA acts like a tRNA, entering the A-site of stalled ribosomes, displacing the stalled mRNA. The ribosome then switches to translate the ORF on the tmRNA; the nascent peptide is terminated with the 'tag peptide' encoded by the tmRNA and targeted for degradation. The ribosome is freed to recommence translation, which seems to be the essential function of trans-translation. The sequence is that of SsrA-binding protein from Microcystis aeruginosa (strain NIES-843 / IAM M-2473).